The sequence spans 68 residues: Conotoxin Cal14.13c (68 aa).

The first 20 residues, 1–20 (MKLCVVXVLLMLAMPFNGGE), serve as a signal peptide directing secretion. The propeptide occupies 21 to 68 (ASRFFNQHARSQRSGMKTRGIWCDPPCPEGETCRGGECSDEFNGDLGG). L66 carries the post-translational modification Leucine amide.

Post-translationally, contains 2 disulfide bonds. In terms of tissue distribution, expressed by the venom duct.

It localises to the secreted. Functionally, probable neurotoxin with unknown target. Possibly targets ion channels. This Californiconus californicus (California cone) protein is Conotoxin Cal14.13c.